Here is a 217-residue protein sequence, read N- to C-terminus: Thiamine-phosphate synthase (217 aa).

4-amino-2-methyl-5-(diphosphooxymethyl)pyrimidine-binding positions include 37 to 41 (QFREK) and asparagine 72. The Mg(2+) site is built by aspartate 73 and aspartate 92. Serine 110 serves as a coordination point for 4-amino-2-methyl-5-(diphosphooxymethyl)pyrimidine. 136 to 138 (TVS) is a 2-[(2R,5Z)-2-carboxy-4-methylthiazol-5(2H)-ylidene]ethyl phosphate binding site. 4-amino-2-methyl-5-(diphosphooxymethyl)pyrimidine is bound at residue lysine 139. Residues glycine 168 and 188-189 (IS) each bind 2-[(2R,5Z)-2-carboxy-4-methylthiazol-5(2H)-ylidene]ethyl phosphate.

The protein belongs to the thiamine-phosphate synthase family. It depends on Mg(2+) as a cofactor.

The enzyme catalyses 2-[(2R,5Z)-2-carboxy-4-methylthiazol-5(2H)-ylidene]ethyl phosphate + 4-amino-2-methyl-5-(diphosphooxymethyl)pyrimidine + 2 H(+) = thiamine phosphate + CO2 + diphosphate. It catalyses the reaction 2-(2-carboxy-4-methylthiazol-5-yl)ethyl phosphate + 4-amino-2-methyl-5-(diphosphooxymethyl)pyrimidine + 2 H(+) = thiamine phosphate + CO2 + diphosphate. The catalysed reaction is 4-methyl-5-(2-phosphooxyethyl)-thiazole + 4-amino-2-methyl-5-(diphosphooxymethyl)pyrimidine + H(+) = thiamine phosphate + diphosphate. The protein operates within cofactor biosynthesis; thiamine diphosphate biosynthesis; thiamine phosphate from 4-amino-2-methyl-5-diphosphomethylpyrimidine and 4-methyl-5-(2-phosphoethyl)-thiazole: step 1/1. Its function is as follows. Condenses 4-methyl-5-(beta-hydroxyethyl)thiazole monophosphate (THZ-P) and 2-methyl-4-amino-5-hydroxymethyl pyrimidine pyrophosphate (HMP-PP) to form thiamine monophosphate (TMP). This chain is Thiamine-phosphate synthase, found in Anoxybacillus flavithermus (strain DSM 21510 / WK1).